The chain runs to 184 residues: Adenine phosphoribosyltransferase 2 (184 aa).

It belongs to the purine/pyrimidine phosphoribosyltransferase family. Homodimer.

The protein resides in the cytoplasm. It catalyses the reaction AMP + diphosphate = 5-phospho-alpha-D-ribose 1-diphosphate + adenine. It functions in the pathway purine metabolism; AMP biosynthesis via salvage pathway; AMP from adenine: step 1/1. In terms of biological role, catalyzes a salvage reaction resulting in the formation of AMP, that is energically less costly than de novo synthesis. The chain is Adenine phosphoribosyltransferase 2 from Rhizobium etli (strain ATCC 51251 / DSM 11541 / JCM 21823 / NBRC 15573 / CFN 42).